Reading from the N-terminus, the 237-residue chain is Carbohydrate deacetylase (237 aa).

Positions 59 and 125 each coordinate Mg(2+).

Belongs to the YdjC deacetylase family. It depends on Mg(2+) as a cofactor.

Probably catalyzes the deacetylation of acetylated carbohydrates an important step in the degradation of oligosaccharides. The sequence is that of Carbohydrate deacetylase from Halalkalibacterium halodurans (strain ATCC BAA-125 / DSM 18197 / FERM 7344 / JCM 9153 / C-125) (Bacillus halodurans).